Reading from the N-terminus, the 658-residue chain is DNA mismatch repair protein MutL (658 aa).

Residues 114–130 (RQEDSSHATQVKAEDGK) show a composition bias toward basic and acidic residues. Disordered regions lie at residues 114–138 (RQED…TAAA) and 353–405 (PMPS…HSLS). Residues 361 to 372 (ENLFDSASNHPT) are compositionally biased toward polar residues.

This sequence belongs to the DNA mismatch repair MutL/HexB family.

In terms of biological role, this protein is involved in the repair of mismatches in DNA. It is required for dam-dependent methyl-directed DNA mismatch repair. May act as a 'molecular matchmaker', a protein that promotes the formation of a stable complex between two or more DNA-binding proteins in an ATP-dependent manner without itself being part of a final effector complex. The protein is DNA mismatch repair protein MutL of Neisseria gonorrhoeae (strain NCCP11945).